Reading from the N-terminus, the 149-residue chain is Ribosome maturation factor RimP (149 aa).

This sequence belongs to the RimP family.

It is found in the cytoplasm. Its function is as follows. Required for maturation of 30S ribosomal subunits. This Neisseria meningitidis serogroup A / serotype 4A (strain DSM 15465 / Z2491) protein is Ribosome maturation factor RimP.